We begin with the raw amino-acid sequence, 1491 residues long: Neurexin-1a (1491 aa).

The signal sequence occupies residues 1 to 27 (MSFSMRNGAHLIWIGLLVCCLVDMGAS). In terms of domain architecture, Laminin G-like 1 spans 28–208 (MEFTGAEGQW…SDICEADHIC (181 aa)). Residues 28–1415 (MEFTGAEGQW…EVIRESSSTT (1388 aa)) lie on the Extracellular side of the membrane. The EGF-like 1 domain occupies 198–236 (NSDICEADHICLNGGVCSIVNDEPICDCSETGFQGKDCS). 3 cysteine pairs are disulfide-bonded: cysteine 202–cysteine 214, cysteine 208–cysteine 223, and cysteine 225–cysteine 235. Laminin G-like domains lie at 263–460 (MATF…AFKC) and 467–661 (DPVT…KPSC). Aspartate 309, leucine 326, and methionine 394 together coordinate Ca(2+). 5 disulfides stabilise this stretch: cysteine 424–cysteine 460, cysteine 632–cysteine 661, cysteine 669–cysteine 680, cysteine 674–cysteine 689, and cysteine 691–cysteine 701. The EGF-like 2 domain maps to 665-702 (PPKQCLSNPCLNSGTCREGWNRYVCDCSGTGYLGRSCE). 2 consecutive Laminin G-like domains span residues 707–880 (ILSY…IDYC) and 894–1069 (DPVT…ERGC). Intrachain disulfides connect cysteine 1041/cysteine 1069, cysteine 1076/cysteine 1087, cysteine 1081/cysteine 1096, and cysteine 1098/cysteine 1108. Positions 1072 to 1109 (PSTTCQEDSCSNQGVCLQQWEGFSCDCSMTSYGGPLCN) constitute an EGF-like 3 domain. The Laminin G-like 6 domain maps to 1113–1314 (TTYIFGRDGG…DPNVRVEGSA (202 aa)). The tract at residues 1318–1408 (GDMPSSSITP…AKGYPSPEVI (91 aa)) is disordered. Low complexity predominate over residues 1322 to 1353 (SSSITPQSSVSAAGNRSETSPSITDITTTTAS). Polar residues predominate over residues 1354 to 1364 (NRQGKQTTTPQ). The helical transmembrane segment at 1416-1436 (GMVVGIVAAAALCILILLYAM) threads the bilayer. Residues 1437 to 1491 (YKYRNRDEGSYHVDESRNYISNSATQPNGAAVKEKPIGVPKNKKDKKNKDKEYYV) are Cytoplasmic-facing. Positions 1457–1491 (SNSATQPNGAAVKEKPIGVPKNKKDKKNKDKEYYV) are disordered.

Belongs to the neurexin family.

The protein resides in the membrane. In terms of biological role, neuronal cell surface protein that may be involved in cell recognition and cell adhesion. This is Neurexin-1a (nrxn1a) from Danio rerio (Zebrafish).